The sequence spans 479 residues: BRAP2 RING ZnF UBP domain-containing protein 2 (479 aa).

Residues 167–207 (CPVCLERLDQDTGGILTTMCNHSFHCSCISNWPDSSCPVCR) form an RING-type; atypical zinc finger. A UBP-type; degenerate zinc finger spans residues 201 to 294 (SSCPVCRYCQ…GKLVELNSHG (94 aa)). 8 residues coordinate Zn(2+): Cys-218, Cys-221, Cys-230, Cys-233, Cys-238, His-245, His-249, and His-255. Residues 328–442 (NELLQAQLEN…MAQMDGESEV (115 aa)) are a coiled coil. Positions 434–479 (AQMDGESEVSETKEVQDATVSTTNTSSSGAGNVIHANKKKSNRRKG) are disordered. Residues 451 to 466 (ATVSTTNTSSSGAGNV) show a composition bias toward low complexity. Positions 469 to 479 (ANKKKSNRRKG) are enriched in basic residues.

As to quaternary structure, component of the heteromeric E3 ligase complex made of BRIZ1 and BRIZ2. Forms heterooligomers with BRIZ1 via coiled-coil domains.

The catalysed reaction is S-ubiquitinyl-[E2 ubiquitin-conjugating enzyme]-L-cysteine + [acceptor protein]-L-lysine = [E2 ubiquitin-conjugating enzyme]-L-cysteine + N(6)-ubiquitinyl-[acceptor protein]-L-lysine.. The protein operates within protein modification; protein ubiquitination. Its function is as follows. RING-type ubiquitin E3 ligase that binds ubiquitin and is required for seed germination and post-germination growth. This Arabidopsis thaliana (Mouse-ear cress) protein is BRAP2 RING ZnF UBP domain-containing protein 2.